The primary structure comprises 185 residues: Putative manganese efflux pump MntP (185 aa).

A run of 6 helical transmembrane segments spans residues 3–23 (IFTLLMIAAGLSMDNFAVSLA), 40–60 (LLFVAAHLVMFSLGWFGVSVI), 64–84 (FDAYDHWISFGLLVFIGLRMI), 102–122 (TFSRLLLIALATSMDALAVGI), 124–144 (LSLAGVHFVLSVAAISFFVLI), and 165–185 (EIFGGIVLIGIALKILLDAMM).

It belongs to the MntP (TC 9.B.29) family.

Its subcellular location is the cell inner membrane. Functionally, probably functions as a manganese efflux pump. In Elusimicrobium minutum (strain Pei191), this protein is Putative manganese efflux pump MntP.